A 322-amino-acid chain; its full sequence is Probable uridine nucleosidase 2 (322 aa).

Catalysis depends on residues Asp14 and His246.

The protein belongs to the IUNH family. In terms of assembly, component of the NSH heterocomplex made of URH1/NSH1 and URH2/NSH2 which exhibits strong xanthosine nucleosidase activity. Interacts with URH1. Expressed in roots, seedlings and flowers.

It localises to the cytoplasm. The protein localises to the cytosol. It catalyses the reaction uridine + H2O = D-ribose + uracil. It carries out the reaction inosine + H2O = hypoxanthine + D-ribose. The catalysed reaction is xanthosine + H2O = D-ribose + xanthine. Its function is as follows. Involved in pyrimidine breakdown, especially in response to dark stress. In the presence of URH1, exhibits efficient inosine and xanthosine hydrolytic activities. Support inosine breakdown especially during the late phase of senescence. In Arabidopsis thaliana (Mouse-ear cress), this protein is Probable uridine nucleosidase 2.